We begin with the raw amino-acid sequence, 318 residues long: Small ribosomal subunit biogenesis GTPase RsgA (318 aa).

The CP-type G domain maps to Arg82 to Phe246. GTP contacts are provided by residues Asn132–Asp135 and Gly186–Thr194. Residues Cys270, Cys275, His277, and Cys283 each coordinate Zn(2+).

It belongs to the TRAFAC class YlqF/YawG GTPase family. RsgA subfamily. In terms of assembly, monomer. Associates with 30S ribosomal subunit, binds 16S rRNA. The cofactor is Zn(2+).

The protein localises to the cytoplasm. One of several proteins that assist in the late maturation steps of the functional core of the 30S ribosomal subunit. Helps release RbfA from mature subunits. May play a role in the assembly of ribosomal proteins into the subunit. Circularly permuted GTPase that catalyzes slow GTP hydrolysis, GTPase activity is stimulated by the 30S ribosomal subunit. The protein is Small ribosomal subunit biogenesis GTPase RsgA of Variovorax paradoxus (strain S110).